We begin with the raw amino-acid sequence, 2314 residues long: A-kinase anchor protein 6 (2314 aa).

A compositionally biased stretch (polar residues) spans 1–12 (MLTMSVTLSPLR). Disordered regions lie at residues 1–25 (MLTMSVTLSPLRSQGPDPMATDASP), 285–432 (PSSC…DPPD), 505–613 (SLCR…PCHA), and 736–755 (TDEKSERPSSSEKNESHSAT). A compositionally biased stretch (basic and acidic residues) spans 301–311 (SDDHKGEHGED). Positions 319-330 (QLDSTVGMSSLD) are enriched in polar residues. The span at 398 to 420 (ETQKNERKGSDRKGQVVDLKPEL) shows a compositional bias: basic and acidic residues. Low complexity predominate over residues 569-592 (SKASSSPPCSHSSESSLGSDSIKS). Positions 736–753 (TDEKSERPSSSEKNESHS) are enriched in basic and acidic residues. Spectrin repeat units follow at residues 768 to 847 (QHQE…QLLE) and 1033 to 1148 (ILEK…LLDD). A Phosphoserine modification is found at Ser1072. A disordered region spans residues 1349-1401 (CHSGDLSQNSGSESGIVSEGDNEMPTNSDMSLFSMVDGSPSNPETEHPDPQMG). Positions 1353–1363 (DLSQNSGSESG) are enriched in polar residues. Ser1568 and Ser1593 each carry phosphoserine. Basic and acidic residues-rich tracts occupy residues 1816 to 1831 (RSGVTDEIKVNKDGGG) and 1874 to 1891 (GENKKSTYDVSKDPHVAD). 3 disordered regions span residues 1816–1838 (RSGVTDEIKVNKDGGGNEKANPS), 1854–1926 (LSEN…KTIS), and 1940–2012 (SEDS…SGAR). Residues 1917 to 1926 (NLASNVKTIS) show a composition bias toward polar residues. Basic and acidic residues predominate over residues 1944–1958 (SVARKEFCPPNDRHP). Residues 2062–2075 (IIDMASTALKSKSQ) form a PKA-RII subunit binding domain region. The disordered stretch occupies residues 2166-2286 (EEAGLPGALP…NAKQPKGKVA (121 aa)). Positions 2215-2226 (GADDAKEGDDVS) are enriched in basic and acidic residues. The span at 2227–2243 (HTSQGCAESTEPTTPSG) shows a compositional bias: polar residues.

Interacts with RII subunit of PKA, phosphatase 2B (calcineurin) and AKAP79. Interacts with SYNPO2.

The protein resides in the sarcoplasmic reticulum. Its subcellular location is the nucleus membrane. In terms of biological role, binds to type II regulatory subunits of protein kinase A and anchors/targets them to the nuclear membrane or sarcoplasmic reticulum. May act as an adapter for assembling multiprotein complexes. This Rattus norvegicus (Rat) protein is A-kinase anchor protein 6 (Akap6).